Here is a 367-residue protein sequence, read N- to C-terminus: Germination protease (367 aa).

Positions 1-13 (MEEQQIPFQVRTD) are excised as a propeptide. The segment at 267 to 287 (KDDPSKSLTPAGMSFGNRKLT) is disordered.

This sequence belongs to the peptidase A25 family. Homotetramer. In terms of processing, autoproteolytically processed. The inactive tetrameric zymogen termed p46 autoprocesses to a smaller form termed p41, which is active only during spore germination.

It carries out the reaction Endopeptidase action with P4 Glu or Asp, P1 preferably Glu &gt; Asp, P1' hydrophobic and P2' Ala.. Initiates the rapid degradation of small, acid-soluble proteins during spore germination. This chain is Germination protease, found in Oceanobacillus iheyensis (strain DSM 14371 / CIP 107618 / JCM 11309 / KCTC 3954 / HTE831).